A 142-amino-acid polypeptide reads, in one-letter code: Large ribosomal subunit protein uL11 (142 aa).

Belongs to the universal ribosomal protein uL11 family. In terms of assembly, part of the ribosomal stalk of the 50S ribosomal subunit. Interacts with L10 and the large rRNA to form the base of the stalk. L10 forms an elongated spine to which L12 dimers bind in a sequential fashion forming a multimeric L10(L12)X complex. Post-translationally, one or more lysine residues are methylated.

Functionally, forms part of the ribosomal stalk which helps the ribosome interact with GTP-bound translation factors. The chain is Large ribosomal subunit protein uL11 from Pasteurella multocida (strain Pm70).